A 481-amino-acid polypeptide reads, in one-letter code: Glutamate--tRNA ligase (481 aa).

The 'HIGH' region signature appears at P9 to T19. The 'KMSKS' region motif lies at K247–R251. Residue K250 coordinates ATP.

The protein belongs to the class-I aminoacyl-tRNA synthetase family. Glutamate--tRNA ligase type 1 subfamily. Monomer.

The protein localises to the cytoplasm. The enzyme catalyses tRNA(Glu) + L-glutamate + ATP = L-glutamyl-tRNA(Glu) + AMP + diphosphate. Catalyzes the attachment of glutamate to tRNA(Glu) in a two-step reaction: glutamate is first activated by ATP to form Glu-AMP and then transferred to the acceptor end of tRNA(Glu). This chain is Glutamate--tRNA ligase, found in Trichormus variabilis (strain ATCC 29413 / PCC 7937) (Anabaena variabilis).